Consider the following 289-residue polypeptide: ATP synthase gamma chain (289 aa).

The protein belongs to the ATPase gamma chain family. As to quaternary structure, F-type ATPases have 2 components, CF(1) - the catalytic core - and CF(0) - the membrane proton channel. CF(1) has five subunits: alpha(3), beta(3), gamma(1), delta(1), epsilon(1). CF(0) has three main subunits: a, b and c.

It localises to the cell membrane. In terms of biological role, produces ATP from ADP in the presence of a proton gradient across the membrane. The gamma chain is believed to be important in regulating ATPase activity and the flow of protons through the CF(0) complex. This Lactococcus lactis subsp. cremoris (strain SK11) protein is ATP synthase gamma chain.